Here is a 216-residue protein sequence, read N- to C-terminus: ATP synthase subunit a (216 aa).

7 helical membrane-spanning segments follow: residues 1–21 (MEYSHVVYALLAVALAIIFVL), 62–82 (LIAAIGLFVFFGNILGMVPGF), 88–108 (NINTNLALALLVFFYYHFEGF), 119–139 (FMGPIPLMAPFFFVVEVISHI), 149–169 (LFANMKAGALLLLTLVSLVIK), 174–194 (LVVSPVVLIFVIAIKFLAIFI), and 196–216 (TYIFMILSVVYIAGAVAHEEH).

The protein belongs to the ATPase A chain family. In terms of assembly, F-type ATPases have 2 components, CF(1) - the catalytic core - and CF(0) - the membrane proton channel. CF(1) has five subunits: alpha(3), beta(3), gamma(1), delta(1), epsilon(1). CF(0) has three main subunits: a(1), b(2) and c(9-12). The alpha and beta chains form an alternating ring which encloses part of the gamma chain. CF(1) is attached to CF(0) by a central stalk formed by the gamma and epsilon chains, while a peripheral stalk is formed by the delta and b chains.

It is found in the cell inner membrane. Key component of the proton channel; it plays a direct role in the translocation of protons across the membrane. In Aquifex aeolicus (strain VF5), this protein is ATP synthase subunit a.